Reading from the N-terminus, the 808-residue chain is Leucine-rich repeat-containing protein 41 (808 aa).

An interaction with Elongin BC complex region spans residues 45-54 (ALFELCGRAV). 3 positions are modified to phosphoserine: serine 155, serine 276, and serine 326. 2 disordered regions span residues 269–289 (ASRG…SRRP) and 304–404 (TRRK…GSGA). Residue threonine 327 is modified to Phosphothreonine. Positions 357–379 (PSSAPTAASSSTSSKRAPASSVS) are enriched in low complexity. Position 369 is a phosphoserine (serine 369). Residues 383–397 (PLKRFKRATGKKGPR) show a composition bias toward basic residues. LRR repeat units lie at residues 483 to 503 (WVSL…IFRL), 514 to 526 (AGCR…LSDL), 527 to 551 (FSPL…VLSI), 609 to 631 (SGSL…FGLV), 632 to 655 (LQTL…LADC), 697 to 724 (NSTL…VFSE), and 727 to 748 (SSSL…LLEF).

As to quaternary structure, part of an E3 ubiquitin-protein ligase complex with Elongin BC (ELOB and ELOC), RBX1 and CUL5. Component of a probable ECS(LRRC41) complex which contains CUL5, RNF7/RBX2, Elongin BC and LRRC41. Interacts with CUL5, RNF7, ELOB and ELOC.

The protein operates within protein modification; protein ubiquitination. Its function is as follows. Probable substrate recognition component of an ECS (Elongin BC-CUL2/5-SOCS-box protein) E3 ubiquitin ligase complex which mediates the ubiquitination and subsequent proteasomal degradation of target proteins. This chain is Leucine-rich repeat-containing protein 41 (Lrrc41), found in Rattus norvegicus (Rat).